A 462-amino-acid polypeptide reads, in one-letter code: Syringate O-demethylase (462 aa).

The protein belongs to the GcvT family.

It carries out the reaction syringate + (6S)-5,6,7,8-tetrahydrofolate = 3-O-methylgallate + (6S)-5-methyl-5,6,7,8-tetrahydrofolate. It functions in the pathway secondary metabolite metabolism; lignin degradation. Its function is as follows. Involved in the catabolism of syringate. Catalyzes the conversion of syringate to 3-O-methylgallate (3MGA) in the presence of tetrahydrofolate. Has weak activity with vanillate and 3-O-methylgallate. The sequence is that of Syringate O-demethylase from Sphingobium sp. (strain NBRC 103272 / SYK-6).